Consider the following 207-residue polypeptide: Outer-membrane lipoprotein LolB (207 aa).

The N-terminal stretch at M1–S26 is a signal peptide. C27 carries N-palmitoyl cysteine lipidation. C27 carries S-diacylglycerol cysteine lipidation.

Belongs to the LolB family. As to quaternary structure, monomer.

Its subcellular location is the cell outer membrane. Functionally, plays a critical role in the incorporation of lipoproteins in the outer membrane after they are released by the LolA protein. The sequence is that of Outer-membrane lipoprotein LolB from Francisella tularensis subsp. tularensis (strain FSC 198).